A 251-amino-acid polypeptide reads, in one-letter code: Uroporphyrinogen-III synthase (251 aa).

Residues 231–251 (PAPNPESLASSIVAFDEENSS) are disordered.

This sequence belongs to the uroporphyrinogen-III synthase family.

It catalyses the reaction hydroxymethylbilane = uroporphyrinogen III + H2O. It functions in the pathway porphyrin-containing compound metabolism; protoporphyrin-IX biosynthesis; coproporphyrinogen-III from 5-aminolevulinate: step 3/4. Catalyzes cyclization of the linear tetrapyrrole, hydroxymethylbilane, to the macrocyclic uroporphyrinogen III. This Schizosaccharomyces pombe (strain 972 / ATCC 24843) (Fission yeast) protein is Uroporphyrinogen-III synthase (ups1).